Here is a 358-residue protein sequence, read N- to C-terminus: UDP-N-acetylglucosamine--N-acetylmuramyl-(pentapeptide) pyrophosphoryl-undecaprenol N-acetylglucosamine transferase (358 aa).

UDP-N-acetyl-alpha-D-glucosamine-binding positions include 11-13 (TGG), Asn-120, Arg-161, Ser-188, and Gln-282.

It belongs to the glycosyltransferase 28 family. MurG subfamily.

The protein localises to the cell inner membrane. The catalysed reaction is di-trans,octa-cis-undecaprenyl diphospho-N-acetyl-alpha-D-muramoyl-L-alanyl-D-glutamyl-meso-2,6-diaminopimeloyl-D-alanyl-D-alanine + UDP-N-acetyl-alpha-D-glucosamine = di-trans,octa-cis-undecaprenyl diphospho-[N-acetyl-alpha-D-glucosaminyl-(1-&gt;4)]-N-acetyl-alpha-D-muramoyl-L-alanyl-D-glutamyl-meso-2,6-diaminopimeloyl-D-alanyl-D-alanine + UDP + H(+). It participates in cell wall biogenesis; peptidoglycan biosynthesis. In terms of biological role, cell wall formation. Catalyzes the transfer of a GlcNAc subunit on undecaprenyl-pyrophosphoryl-MurNAc-pentapeptide (lipid intermediate I) to form undecaprenyl-pyrophosphoryl-MurNAc-(pentapeptide)GlcNAc (lipid intermediate II). This is UDP-N-acetylglucosamine--N-acetylmuramyl-(pentapeptide) pyrophosphoryl-undecaprenol N-acetylglucosamine transferase from Synechococcus sp. (strain WH7803).